Here is a 122-residue protein sequence, read N- to C-terminus: Basic phospholipase A2 LmTX-I (122 aa).

Intrachain disulfides connect cysteine 26–cysteine 115, cysteine 28–cysteine 44, cysteine 43–cysteine 95, cysteine 49–cysteine 122, cysteine 50–cysteine 88, and cysteine 75–cysteine 86. Residues tyrosine 27, glycine 29, and glycine 31 each contribute to the Ca(2+) site. Histidine 47 is a catalytic residue. Aspartate 48 provides a ligand contact to Ca(2+). Aspartate 89 is a catalytic residue.

Monomer. Ca(2+) serves as cofactor. As to expression, expressed by the venom gland.

The protein localises to the secreted. The catalysed reaction is a 1,2-diacyl-sn-glycero-3-phosphocholine + H2O = a 1-acyl-sn-glycero-3-phosphocholine + a fatty acid + H(+). Its activity is regulated as follows. Inhibited by Mn(2+), Mg(2+), Zn(2+) and Cu(2+). Snake venom phospholipase A2 (PLA2) that displays neurotoxic and myotoxic activities. Induces inflammatory edema by mechanisms involving mast cell activation and arachidonic acid metabolites. Increases plasma creatine kinase activity. PLA2 catalyzes the calcium-dependent hydrolysis of the 2-acyl groups in 3-sn-phosphoglycerides. This Lachesis muta muta (Bushmaster) protein is Basic phospholipase A2 LmTX-I.